The sequence spans 236 residues: Syntaxin-8 (236 aa).

The Cytoplasmic portion of the chain corresponds to 1–215 (MAPDPWFSTY…MVDRKSASCG (215 aa)). Residues 42-65 (VTIRALLQNLKEKIALLKDLLLRA) adopt a coiled-coil conformation. The t-SNARE coiled-coil homology domain occupies 145–207 (QKIIQEQDAG…RNETRRVNMV (63 aa)). Phosphoserine is present on serine 160. A helical; Anchor for type IV membrane protein transmembrane segment spans residues 216 to 232 (MIMVILLLLVAIVVVAV). At 233-236 (WPTN) the chain is on the vesicular side.

Belongs to the syntaxin family. Forms a SNARE complex with STX7, VTI1B and VAMP8 which functions in the homotypic fusion of late endosomes. Part of the SNARE core complex containing STX7, VAMP8 and VTI1B. Interacts with VAMP8. Interacts with HECTD3. Interacts with TPC1. Post-translationally, ubiquitinated by HECTD3. As to expression, highly expressed in heart. Also found in brain, kidney, liver, lung, placenta, skeletal muscle, spleen and pancreas.

It is found in the membrane. Vesicle trafficking protein that functions in the early secretory pathway, possibly by mediating retrograde transport from cis-Golgi membranes to the ER. This Homo sapiens (Human) protein is Syntaxin-8 (STX8).